The sequence spans 498 residues: Ribulose bisphosphate carboxylase large chain (498 aa).

Positions 1–2 are excised as a propeptide; that stretch reads MS. Pro-3 carries the post-translational modification N-acetylproline. The residue at position 14 (Lys-14) is an N6,N6,N6-trimethyllysine. Substrate contacts are provided by Asn-123 and Thr-173. Lys-175 serves as the catalytic Proton acceptor. Residue Lys-177 participates in substrate binding. The Mg(2+) site is built by Lys-201, Asp-203, and Glu-204. N6-carboxylysine is present on Lys-201. Residue His-294 is the Proton acceptor of the active site. Residues Arg-295, His-327, and Ser-379 each coordinate substrate. A disordered region spans residues 473-498; it reads DTLDPNDKKQRDNEDTLADKFFGDKG.

This sequence belongs to the RuBisCO large chain family. Type I subfamily. As to quaternary structure, heterohexadecamer of 8 large chains and 8 small chains; disulfide-linked. The disulfide link is formed within the large subunit homodimers. Mg(2+) serves as cofactor. In terms of processing, the disulfide bond which can form in the large chain dimeric partners within the hexadecamer appears to be associated with oxidative stress and protein turnover.

The protein resides in the plastid. It catalyses the reaction 2 (2R)-3-phosphoglycerate + 2 H(+) = D-ribulose 1,5-bisphosphate + CO2 + H2O. It carries out the reaction D-ribulose 1,5-bisphosphate + O2 = 2-phosphoglycolate + (2R)-3-phosphoglycerate + 2 H(+). In terms of biological role, ruBisCO catalyzes two reactions: the carboxylation of D-ribulose 1,5-bisphosphate, the primary event in carbon dioxide fixation, as well as the oxidative fragmentation of the pentose substrate in the photorespiration process. Both reactions occur simultaneously and in competition at the same active site. The chain is Ribulose bisphosphate carboxylase large chain from Cuscuta exaltata (Tall dodder).